The following is a 280-amino-acid chain: Shikimate dehydrogenase (NADP(+)) (280 aa).

Shikimate contacts are provided by residues 18–20 and T65; that span reads SRS. Residue K69 is the Proton acceptor of the active site. N90 and D105 together coordinate shikimate. Residues 131-135, 154-159, and I219 each bind NADP(+); these read GAGGA and NRTRAR. Y221 is a binding site for shikimate. Residue G242 participates in NADP(+) binding.

This sequence belongs to the shikimate dehydrogenase family. In terms of assembly, homodimer.

It catalyses the reaction shikimate + NADP(+) = 3-dehydroshikimate + NADPH + H(+). It functions in the pathway metabolic intermediate biosynthesis; chorismate biosynthesis; chorismate from D-erythrose 4-phosphate and phosphoenolpyruvate: step 4/7. Functionally, involved in the biosynthesis of the chorismate, which leads to the biosynthesis of aromatic amino acids. Catalyzes the reversible NADPH linked reduction of 3-dehydroshikimate (DHSA) to yield shikimate (SA). In Methylocella silvestris (strain DSM 15510 / CIP 108128 / LMG 27833 / NCIMB 13906 / BL2), this protein is Shikimate dehydrogenase (NADP(+)).